We begin with the raw amino-acid sequence, 517 residues long: Fluconazole resistance protein 1 (517 aa).

The segment at residues 26 to 52 is a DNA-binding region (zn(2)-C6 fungal-type); that stretch reads CDSCRIKKTKCDGKKPCNRCTLDNKIC. Disordered stretches follow at residues 106–137, 250–270, 284–307, and 378–403; these read KSVD…QNST, SAQF…QQQQ, SDIE…PPTS, and GSIQ…VSSF. A compositionally biased stretch (low complexity) spans 113 to 124; that stretch reads SSPASSTPNSSS. The segment covering 250 to 260 has biased composition (polar residues); sequence SAQFSKGTFSP. The segment covering 261–270 has biased composition (low complexity); the sequence is QQQQLQQQQQ. Residues 298–307 show a composition bias toward polar residues; the sequence is NSGSVSPPTS. The segment covering 388–398 has biased composition (basic residues); that stretch reads GSVHKPVRNHS.

Its subcellular location is the nucleus. In terms of biological role, transcription factor that acts as a negative regulator of fluconazole resistance in C.albicans. Also confers fluconazole resistance in S.cerevisiae by activation of the PDR5 gene. The sequence is that of Fluconazole resistance protein 1 (FCR1) from Candida albicans (Yeast).